The sequence spans 219 residues: Peroxiredoxin (219 aa).

Residues 2 to 164 (PLIGDDAPSF…IKRIVVALQK (163 aa)) form the Thioredoxin domain. Cys-44 functions as the Cysteine sulfenic acid (-SOH) intermediate in the catalytic mechanism. Arg-127 serves as a coordination point for substrate. A disulfide bridge links Cys-206 with Cys-212.

It belongs to the peroxiredoxin family. Prx6 subfamily. As to quaternary structure, homodecamer. Pentamer of dimers that assemble into a ring structure.

The protein localises to the cytoplasm. It catalyses the reaction a hydroperoxide + [thioredoxin]-dithiol = an alcohol + [thioredoxin]-disulfide + H2O. Thiol-specific peroxidase that catalyzes the reduction of hydrogen peroxide and organic hydroperoxides to water and alcohols, respectively. Plays a role in cell protection against oxidative stress by detoxifying peroxides. This Methanosarcina mazei (strain ATCC BAA-159 / DSM 3647 / Goe1 / Go1 / JCM 11833 / OCM 88) (Methanosarcina frisia) protein is Peroxiredoxin.